The primary structure comprises 445 residues: GTPase Der (445 aa).

EngA-type G domains are found at residues 3-167 (PVIA…YAGQ) and 180-353 (IKIA…AAAM). GTP is bound by residues 9-16 (GRPNVGKS), 56-60 (DTGGF), 119-122 (NKAE), 186-193 (GRPNVGKS), 233-237 (DTAGL), and 298-301 (NKWD). The region spanning 354–438 (AKLPTPKLTR…PLRIEFRSSN (85 aa)) is the KH-like domain.

This sequence belongs to the TRAFAC class TrmE-Era-EngA-EngB-Septin-like GTPase superfamily. EngA (Der) GTPase family. Associates with the 50S ribosomal subunit.

In terms of biological role, GTPase that plays an essential role in the late steps of ribosome biogenesis. This Burkholderia lata (strain ATCC 17760 / DSM 23089 / LMG 22485 / NCIMB 9086 / R18194 / 383) protein is GTPase Der.